The chain runs to 142 residues: MAKIKDDCIELELTPRRYQELDDDPFILSVFELLENKKAVVRDFSAVLLESEYKVLISGIETMIKGNQDSISLETIEPFLFLSIDQENGNYRIKIKIIFDDYKESKSNSNLFEINCNEEKLESFVTALKLNLENTKNPSKLP.

In terms of biological role, immunity protein component of a toxin-immunity protein module, which functions as a cellular contact-dependent growth inhibition (CDI) system. Neutralizes the tRNase activity of cognate toxin WapA upon expression in E.coli. Does not inhibit WapA from other strains of B.subtilis. The WapA C-terminus cannot be expressed on its own in E.coli, however it can be cloned in the presence of its cognate immunity protein gene. Cell contact is necessary for growth inhibition. Unlike the LXG toxin-immunity modules, WapAI mediates competition under shaking culture conditions. This Bacillus subtilis (strain 168) protein is Immunity protein WapI (wapI).